A 504-amino-acid polypeptide reads, in one-letter code: Maturase K (504 aa).

Belongs to the intron maturase 2 family. MatK subfamily.

Its subcellular location is the plastid. It localises to the chloroplast. Usually encoded in the trnK tRNA gene intron. Probably assists in splicing its own and other chloroplast group II introns. This Quercus robur (English oak) protein is Maturase K.